A 307-amino-acid chain; its full sequence is 4-hydroxy-3-methylbut-2-enyl diphosphate reductase (307 aa).

Cysteine 13 lines the [4Fe-4S] cluster pocket. Residues histidine 42 and histidine 75 each contribute to the (2E)-4-hydroxy-3-methylbut-2-enyl diphosphate site. The dimethylallyl diphosphate site is built by histidine 42 and histidine 75. Isopentenyl diphosphate-binding residues include histidine 42 and histidine 75. Position 97 (cysteine 97) interacts with [4Fe-4S] cluster. Histidine 125 is a binding site for (2E)-4-hydroxy-3-methylbut-2-enyl diphosphate. Histidine 125 serves as a coordination point for dimethylallyl diphosphate. Histidine 125 is a binding site for isopentenyl diphosphate. Glutamate 127 functions as the Proton donor in the catalytic mechanism. Threonine 165 provides a ligand contact to (2E)-4-hydroxy-3-methylbut-2-enyl diphosphate. [4Fe-4S] cluster is bound at residue cysteine 195. Serine 223, serine 224, asparagine 225, and serine 267 together coordinate (2E)-4-hydroxy-3-methylbut-2-enyl diphosphate. Serine 223, serine 224, asparagine 225, and serine 267 together coordinate dimethylallyl diphosphate. The isopentenyl diphosphate site is built by serine 223, serine 224, asparagine 225, and serine 267.

The protein belongs to the IspH family. It depends on [4Fe-4S] cluster as a cofactor.

It catalyses the reaction isopentenyl diphosphate + 2 oxidized [2Fe-2S]-[ferredoxin] + H2O = (2E)-4-hydroxy-3-methylbut-2-enyl diphosphate + 2 reduced [2Fe-2S]-[ferredoxin] + 2 H(+). It carries out the reaction dimethylallyl diphosphate + 2 oxidized [2Fe-2S]-[ferredoxin] + H2O = (2E)-4-hydroxy-3-methylbut-2-enyl diphosphate + 2 reduced [2Fe-2S]-[ferredoxin] + 2 H(+). It functions in the pathway isoprenoid biosynthesis; dimethylallyl diphosphate biosynthesis; dimethylallyl diphosphate from (2E)-4-hydroxy-3-methylbutenyl diphosphate: step 1/1. It participates in isoprenoid biosynthesis; isopentenyl diphosphate biosynthesis via DXP pathway; isopentenyl diphosphate from 1-deoxy-D-xylulose 5-phosphate: step 6/6. Functionally, catalyzes the conversion of 1-hydroxy-2-methyl-2-(E)-butenyl 4-diphosphate (HMBPP) into a mixture of isopentenyl diphosphate (IPP) and dimethylallyl diphosphate (DMAPP). Acts in the terminal step of the DOXP/MEP pathway for isoprenoid precursor biosynthesis. The polypeptide is 4-hydroxy-3-methylbut-2-enyl diphosphate reductase (Chlamydia trachomatis serovar D (strain ATCC VR-885 / DSM 19411 / UW-3/Cx)).